Reading from the N-terminus, the 352-residue chain is tRNA pseudouridine synthase D (352 aa).

Catalysis depends on Asp81, which acts as the Nucleophile. The TRUD domain maps to Gly157–Leu303.

The protein belongs to the pseudouridine synthase TruD family.

The catalysed reaction is uridine(13) in tRNA = pseudouridine(13) in tRNA. Functionally, responsible for synthesis of pseudouridine from uracil-13 in transfer RNAs. The polypeptide is tRNA pseudouridine synthase D (Pseudomonas fluorescens (strain Pf0-1)).